The sequence spans 251 residues: uncharacterized protein (251 aa).

Positions 4 to 152 constitute an N-acetyltransferase domain; it reads IEITKDNIED…YFQLMALTWN (149 aa).

It belongs to the acetyltransferase family.

This is an uncharacterized protein from Bacillus subtilis (strain 168).